Here is a 635-residue protein sequence, read N- to C-terminus: Histone-lysine N-methyltransferase Su(var)3-9 (635 aa).

The segment at 81–188 (ERLSEKKIKN…LNGFAKLKRR (108 aa)) is binds to Su(var)205 and Suvar(3)7. Disordered stretches follow at residues 123–161 (RLCT…NSSG) and 191–210 (SCVG…MGVI). 2 stretches are compositionally biased toward low complexity: residues 128 to 139 (PASSSMPASTSS) and 147 to 161 (RSTS…NSSG). The region spanning 219–278 (YVVERIECVEMDQYQPVFFVKWLGYHDSENTWESLANVADCAEMEKFVERHQQLYETYIA) is the Chromo domain. The Pre-SET domain occupies 410–474 (VGCKCTEDTE…SCSNRLVQHG (65 aa)). Zn(2+) contacts are provided by cysteine 412, cysteine 414, cysteine 421, cysteine 427, cysteine 428, cysteine 456, cysteine 460, cysteine 462, and cysteine 466. The region spanning 477 to 603 (VPLVLFKTAN…AGEELSFDYI (127 aa)) is the SET domain. S-adenosyl-L-methionine contacts are provided by residues 488–490 (SGW), tyrosine 531, and 560–561 (NH). Cysteine 563, cysteine 623, cysteine 625, and cysteine 630 together coordinate Zn(2+). Residues 619–635 (VRVECRCGRDNCRKVLF) enclose the Post-SET domain.

This sequence belongs to the class V-like SAM-binding methyltransferase superfamily. Histone-lysine methyltransferase family. Suvar3-9 subfamily. Interacts with Su(var)205 and Su(var)3-7. Probably associates with HDAC1/Rpd3. Interacts with Rrp6; the interaction promotes association of Rrp6 with a subset of genomic loci.

It localises to the nucleus. The protein localises to the chromosome. Its subcellular location is the centromere. It carries out the reaction L-lysyl(9)-[histone H3] + 3 S-adenosyl-L-methionine = N(6),N(6),N(6)-trimethyl-L-lysyl(9)-[histone H3] + 3 S-adenosyl-L-homocysteine + 3 H(+). Its function is as follows. Histone methyltransferase that specifically trimethylates 'Lys-9' of histone H3 using monomethylated H3 'Lys-9' as substrate. H3 'Lys-9' trimethylation represents a specific tag for epigenetic transcriptional repression by recruiting Su(var)205/HP1 to methylated histones. Mainly functions in heterochromatin regions, thereby playing a central role in the establishment of constitutive heterochromatin at pericentric regions. Involved in heterochromatic gene silencing including the modification of position-effect-variegation. The protein is Histone-lysine N-methyltransferase Su(var)3-9 (Su(var)3-9) of Drosophila melanogaster (Fruit fly).